Here is a 217-residue protein sequence, read N- to C-terminus: Flagellar L-ring protein 1 (217 aa).

Residues 1 to 16 (MTLARLAPLAALLLAA) form the signal peptide. Cys17 carries N-palmitoyl cysteine lipidation. A lipid anchor (S-diacylglycerol cysteine) is attached at Cys17.

Belongs to the FlgH family. As to quaternary structure, the basal body constitutes a major portion of the flagellar organelle and consists of four rings (L,P,S, and M) mounted on a central rod.

It is found in the cell outer membrane. The protein localises to the bacterial flagellum basal body. In terms of biological role, assembles around the rod to form the L-ring and probably protects the motor/basal body from shearing forces during rotation. This chain is Flagellar L-ring protein 1, found in Chromobacterium violaceum (strain ATCC 12472 / DSM 30191 / JCM 1249 / CCUG 213 / NBRC 12614 / NCIMB 9131 / NCTC 9757 / MK).